A 501-amino-acid polypeptide reads, in one-letter code: Cilia- and flagella-associated protein 45 (501 aa).

Residues 75–114 (MTAEDVAAAKREAEAKREQLQAVSKARKEKMLKLEEEAKK) are a coiled coil.

The protein belongs to the CFAP45 family.

It is found in the cell projection. The protein resides in the cilium. Its subcellular location is the flagellum. The chain is Cilia- and flagella-associated protein 45 from Chlamydomonas reinhardtii (Chlamydomonas smithii).